The primary structure comprises 277 residues: 3-methyl-2-oxobutanoate hydroxymethyltransferase (277 aa).

Mg(2+) contacts are provided by D42 and D81. 3-methyl-2-oxobutanoate-binding positions include 42–43, D81, and K110; that span reads DS. Mg(2+) is bound at residue E112. E179 functions as the Proton acceptor in the catalytic mechanism.

Belongs to the PanB family. In terms of assembly, homodecamer; pentamer of dimers. Mg(2+) serves as cofactor.

It is found in the cytoplasm. The catalysed reaction is 3-methyl-2-oxobutanoate + (6R)-5,10-methylene-5,6,7,8-tetrahydrofolate + H2O = 2-dehydropantoate + (6S)-5,6,7,8-tetrahydrofolate. It participates in cofactor biosynthesis; (R)-pantothenate biosynthesis; (R)-pantoate from 3-methyl-2-oxobutanoate: step 1/2. Functionally, catalyzes the reversible reaction in which hydroxymethyl group from 5,10-methylenetetrahydrofolate is transferred onto alpha-ketoisovalerate to form ketopantoate. This is 3-methyl-2-oxobutanoate hydroxymethyltransferase from Anaplasma marginale (strain St. Maries).